We begin with the raw amino-acid sequence, 269 residues long: Aquaporin-1 (269 aa).

Over 1–11 (MASEIKKKLFW) the chain is Cytoplasmic. Residues 12 to 29 (RAVVAEFLAMTLFVFISI) form a helical membrane-spanning segment. Residues 30 to 46 (GSALGFNYPLERNQTLV) are Extracellular-facing. Asn42 carries N-linked (GlcNAc...) asparagine glycosylation. Residues 47–65 (QDNVKVSLAFGLSIATLAQ) traverse the membrane as a helical segment. Over 66-68 (SVG) the chain is Cytoplasmic. The stretch at 69–82 (HISGAHLNPAVTLG) is an intramembrane region. The NPA 1 motif lies at 76-78 (NPA). Over 83–90 (LLLSCQIS) the chain is Cytoplasmic. The helical transmembrane segment at 91–109 (ILRAVMYIIAQCVGAIVAS) threads the bilayer. The Extracellular portion of the chain corresponds to 110 to 133 (AILSGITSSLLENSLGRNDLARGV). Residues 134 to 153 (NSGQGLGIEIIGTLQLVLCV) traverse the membrane as a helical segment. Topologically, residues 154–163 (LATTDRRRRD) are cytoplasmic. A helical membrane pass occupies residues 164–181 (LGGSAPLAIGLSVALGHL). Topologically, residues 182–186 (LAIDY) are extracellular. An intramembrane segment occupies 187–199 (TGCGINPARSFGS). Positions 192–194 (NPA) match the NPA 2 motif. Residues 200–206 (AVLTRNF) lie on the Extracellular side of the membrane. An N-linked (GlcNAc...) asparagine glycan is attached at Asn205. The helical transmembrane segment at 207 to 224 (SNHWIFWVGPFIGSALAV) threads the bilayer. At 225 to 269 (LIYDFILAPRSSDFTDRMKVWTSGQVEEYDLDADDINSRVEMKPK) the chain is on the cytoplasmic side. At Ser247 the chain carries Phosphoserine. Tyr253 bears the Phosphotyrosine mark. Phosphoserine is present on Ser262.

It belongs to the MIP/aquaporin (TC 1.A.8) family. As to quaternary structure, homotetramer; each monomer provides an independent water pore. Component of the ankyrin-1 complex in the erythrocyte, composed of ANK1, RHCE, RHAG, SLC4A1, EPB42, GYPA, GYPB and AQP1. Interacts with EPHB2; involved in endolymph production in the inner ear. Identified in a complex with STOM. Interacts (via the N-terminal) with ANK1 (via ANK 1-5 repeats). Interacts (via the C-terminal) with EPB42. In terms of tissue distribution, erythrocytes and renal tubules.

The protein localises to the cell membrane. It carries out the reaction H2O(in) = H2O(out). It catalyses the reaction nitric oxide(out) = nitric oxide(in). The catalysed reaction is CO2(out) = CO2(in). The enzyme catalyses glycerol(in) = glycerol(out). It carries out the reaction H2O2(out) = H2O2(in). It catalyses the reaction K(+)(in) = K(+)(out). The catalysed reaction is Na(+)(in) = Na(+)(out). Its function is as follows. Forms a water channel that facilitates the transport of water across cell membranes, playing a crucial role in water homeostasis in various tissues. Could also be permeable to small solutes including hydrogen peroxide, glycerol and gases such as amonnia (NH3), nitric oxide (NO) and carbon dioxide (CO2). Recruited to the ankyrin-1 complex, a multiprotein complex of the erythrocyte membrane, it could be part of a CO2 metabolon, linking facilitated diffusion of CO2 across the membrane, anion exchange of Cl(-)/HCO3(-) and interconversion of dissolved CO2 and carbonic acid in the cytosol. In vitro, it shows non-selective gated cation channel activity and may be permeable to cations like K(+) and Na(+) in vivo. The polypeptide is Aquaporin-1 (Rattus norvegicus (Rat)).